A 291-amino-acid polypeptide reads, in one-letter code: Oxidative stress-responsive serine-rich protein 1 (291 aa).

A disordered region spans residues 44–139; it reads RTTVDDTKPK…STGENSTSLD (96 aa). Over residues 65 to 83 the composition is skewed to basic residues; sequence STRKSSRGAVRIQRRRRSK. 2 stretches are compositionally biased toward polar residues: residues 95–113 and 127–139; these read CSTT…SQTE and KEFS…TSLD. Threonine 143 is modified (phosphothreonine).

In terms of tissue distribution, ubiquitous with high level in testis, placenta and cardiac myocytes. Expressed in testis, unpreganant uterus and cardiac myocytes.

The protein is Oxidative stress-responsive serine-rich protein 1 (Oser1) of Rattus norvegicus (Rat).